A 431-amino-acid chain; its full sequence is Serine--tRNA ligase (431 aa).

Threonine 238 to glutamate 240 contacts L-serine. Arginine 269–glutamate 271 contacts ATP. Position 292 (glutamate 292) interacts with L-serine. Glutamate 356–serine 359 is a binding site for ATP. Serine 391 contributes to the L-serine binding site.

Belongs to the class-II aminoacyl-tRNA synthetase family. Type-1 seryl-tRNA synthetase subfamily. In terms of assembly, homodimer. The tRNA molecule binds across the dimer.

Its subcellular location is the cytoplasm. It catalyses the reaction tRNA(Ser) + L-serine + ATP = L-seryl-tRNA(Ser) + AMP + diphosphate + H(+). The enzyme catalyses tRNA(Sec) + L-serine + ATP = L-seryl-tRNA(Sec) + AMP + diphosphate + H(+). Its pathway is aminoacyl-tRNA biosynthesis; selenocysteinyl-tRNA(Sec) biosynthesis; L-seryl-tRNA(Sec) from L-serine and tRNA(Sec): step 1/1. Functionally, catalyzes the attachment of serine to tRNA(Ser). Is also able to aminoacylate tRNA(Sec) with serine, to form the misacylated tRNA L-seryl-tRNA(Sec), which will be further converted into selenocysteinyl-tRNA(Sec). In Leptothrix cholodnii (strain ATCC 51168 / LMG 8142 / SP-6) (Leptothrix discophora (strain SP-6)), this protein is Serine--tRNA ligase.